Reading from the N-terminus, the 424-residue chain is Kynureninase (424 aa).

Pyridoxal 5'-phosphate contacts are provided by residues Leu105, Ser106, 133-136 (FPTD), Asp218, His221, and Tyr243. Lys244 is modified (N6-(pyridoxal phosphate)lysine). Pyridoxal 5'-phosphate is bound by residues Trp274 and Asn302.

It belongs to the kynureninase family. Homodimer. Pyridoxal 5'-phosphate serves as cofactor.

The catalysed reaction is L-kynurenine + H2O = anthranilate + L-alanine + H(+). It catalyses the reaction 3-hydroxy-L-kynurenine + H2O = 3-hydroxyanthranilate + L-alanine + H(+). It functions in the pathway amino-acid degradation; L-kynurenine degradation; L-alanine and anthranilate from L-kynurenine: step 1/1. The protein operates within cofactor biosynthesis; NAD(+) biosynthesis; quinolinate from L-kynurenine: step 2/3. Catalyzes the cleavage of L-kynurenine (L-Kyn) and L-3-hydroxykynurenine (L-3OHKyn) into anthranilic acid (AA) and 3-hydroxyanthranilic acid (3-OHAA), respectively. In Stenotrophomonas maltophilia (strain K279a), this protein is Kynureninase.